We begin with the raw amino-acid sequence, 741 residues long: Pentatricopeptide repeat-containing protein At1g08070, chloroplastic (741 aa).

13 PPR repeats span residues 98 to 132, 133 to 167, 168 to 202, 203 to 229, 230 to 264, 265 to 299, 300 to 330, 331 to 365, 366 to 396, 403 to 433, 434 to 468, 469 to 499, and 505 to 535; these read NLLI…GLLP, NSYT…GCDL, DLYV…DVVS, YTAL…IPVK, DVVS…NVRP, DEST…GFGS, NLKI…LPYK, DVIS…GETP, NDVT…IDKR, ASSL…ILHK, SLSS…GIQP, DDIT…MTQD, and KLEH…MEME. The interval 540–615 is type E motif; that stretch reads IWCSLLKACK…VPGCSSIEID (76 aa). The tract at residues 616–646 is type E(+) motif; it reads SVVHEFIIGDKFHPRNREIYGMLEEMEVLLE. The interval 647–741 is type DYW motif; the sequence is KAGFVPDTSE…DGVCSCNDYW (95 aa).

It belongs to the PPR family. PCMP-H subfamily. In terms of assembly, interacts with ORRM1. Interacts with VAR3/OZ1.

It localises to the plastid. The protein resides in the chloroplast. In terms of biological role, involved in multiple sites RNA editing events in chloroplasts. Involved in the editing of the site 9 of ndhB (ndhB-9) and site 1 of ndhG (ndhG-1) transcripts, which are two plastid-encoded subunits of the chloroplast NAD(P)H dehydrogenase (NDH) complex. Not essential for the activity of the NDH complex of the photosynthetic electron transport chain. This Arabidopsis thaliana (Mouse-ear cress) protein is Pentatricopeptide repeat-containing protein At1g08070, chloroplastic (PCMP-H12).